The sequence spans 352 residues: Ferrochelatase (352 aa).

The Fe cation site is built by His222 and Glu303.

It belongs to the ferrochelatase family.

The protein resides in the cytoplasm. It carries out the reaction heme b + 2 H(+) = protoporphyrin IX + Fe(2+). It participates in porphyrin-containing compound metabolism; protoheme biosynthesis; protoheme from protoporphyrin-IX: step 1/1. In terms of biological role, catalyzes the ferrous insertion into protoporphyrin IX. The polypeptide is Ferrochelatase (Brucella melitensis biotype 2 (strain ATCC 23457)).